The chain runs to 404 residues: Protein ORF23 (404 aa).

It belongs to the lymphocryptovirus BTRF1 family. Interacts with ORF34.

It localises to the host nucleus. The protein localises to the host cytoplasm. In terms of biological role, plays a role in the expression of late genes. This is Protein ORF23 (ORF23) from Homo sapiens (Human).